A 338-amino-acid chain; its full sequence is UDP-3-O-acylglucosamine N-acyltransferase (338 aa).

The active-site Proton acceptor is H239.

This sequence belongs to the transferase hexapeptide repeat family. LpxD subfamily. In terms of assembly, homotrimer.

It catalyses the reaction a UDP-3-O-[(3R)-3-hydroxyacyl]-alpha-D-glucosamine + a (3R)-hydroxyacyl-[ACP] = a UDP-2-N,3-O-bis[(3R)-3-hydroxyacyl]-alpha-D-glucosamine + holo-[ACP] + H(+). It functions in the pathway bacterial outer membrane biogenesis; LPS lipid A biosynthesis. In terms of biological role, catalyzes the N-acylation of UDP-3-O-acylglucosamine using 3-hydroxyacyl-ACP as the acyl donor. Is involved in the biosynthesis of lipid A, a phosphorylated glycolipid that anchors the lipopolysaccharide to the outer membrane of the cell. This Xylella fastidiosa (strain M23) protein is UDP-3-O-acylglucosamine N-acyltransferase.